The sequence spans 390 residues: 1-deoxy-D-xylulose 5-phosphate reductoisomerase (390 aa).

Residues threonine 18, glycine 19, serine 20, isoleucine 21, and asparagine 130 each coordinate NADPH. Lysine 131 contributes to the 1-deoxy-D-xylulose 5-phosphate binding site. Glutamate 132 lines the NADPH pocket. Aspartate 156 is a Mn(2+) binding site. Residues serine 157, glutamate 158, serine 182, and histidine 205 each contribute to the 1-deoxy-D-xylulose 5-phosphate site. A Mn(2+)-binding site is contributed by glutamate 158. Position 211 (glycine 211) interacts with NADPH. Positions 218, 223, 224, and 227 each coordinate 1-deoxy-D-xylulose 5-phosphate. Glutamate 227 provides a ligand contact to Mn(2+).

This sequence belongs to the DXR family. It depends on Mg(2+) as a cofactor. Mn(2+) is required as a cofactor.

The catalysed reaction is 2-C-methyl-D-erythritol 4-phosphate + NADP(+) = 1-deoxy-D-xylulose 5-phosphate + NADPH + H(+). The protein operates within isoprenoid biosynthesis; isopentenyl diphosphate biosynthesis via DXP pathway; isopentenyl diphosphate from 1-deoxy-D-xylulose 5-phosphate: step 1/6. Its function is as follows. Catalyzes the NADPH-dependent rearrangement and reduction of 1-deoxy-D-xylulose-5-phosphate (DXP) to 2-C-methyl-D-erythritol 4-phosphate (MEP). The chain is 1-deoxy-D-xylulose 5-phosphate reductoisomerase from Bacteroides thetaiotaomicron (strain ATCC 29148 / DSM 2079 / JCM 5827 / CCUG 10774 / NCTC 10582 / VPI-5482 / E50).